The sequence spans 92 residues: Cell division protein FtsB (92 aa).

The Cytoplasmic portion of the chain corresponds to 1–3; sequence MRF. The chain crosses the membrane as a helical span at residues 4-21; it reads FQVGLLCLALFVQYRLWF. Over 22 to 92 the chain is Periplasmic; that stretch reads GHNGVQDYTR…TFIRVLPAQQ (71 aa). A coiled-coil region spans residues 40 to 73; that stretch reads LQTNEKLIKRNKVLTADIEDLKLGHEGIEERARN.

It belongs to the FtsB family. In terms of assembly, part of a complex composed of FtsB, FtsL and FtsQ.

The protein localises to the cell inner membrane. Essential cell division protein. May link together the upstream cell division proteins, which are predominantly cytoplasmic, with the downstream cell division proteins, which are predominantly periplasmic. This is Cell division protein FtsB from Pseudoalteromonas translucida (strain TAC 125).